Reading from the N-terminus, the 360-residue chain is DNA replication and repair protein RecF (360 aa).

Position 30–37 (30–37) interacts with ATP; it reads GHNGSGKT.

The protein belongs to the RecF family.

The protein localises to the cytoplasm. In terms of biological role, the RecF protein is involved in DNA metabolism; it is required for DNA replication and normal SOS inducibility. RecF binds preferentially to single-stranded, linear DNA. It also seems to bind ATP. This is DNA replication and repair protein RecF from Actinobacillus pleuropneumoniae serotype 7 (strain AP76).